Reading from the N-terminus, the 98-residue chain is NADH-ubiquinone oxidoreductase chain 4L (98 aa).

Transmembrane regions (helical) follow at residues 1-21 (MTAIYLNLTMAFSLALMGVLV), 29-49 (TLLCLEGMMLSLFILMTLLIT), and 59-79 (LPLTLLVFSACEAAIGLALLV).

Belongs to the complex I subunit 4L family. Core subunit of respiratory chain NADH dehydrogenase (Complex I) which is composed of 45 different subunits.

The protein resides in the mitochondrion inner membrane. The catalysed reaction is a ubiquinone + NADH + 5 H(+)(in) = a ubiquinol + NAD(+) + 4 H(+)(out). Functionally, core subunit of the mitochondrial membrane respiratory chain NADH dehydrogenase (Complex I) which catalyzes electron transfer from NADH through the respiratory chain, using ubiquinone as an electron acceptor. Part of the enzyme membrane arm which is embedded in the lipid bilayer and involved in proton translocation. This Notoryctes typhlops (Southern marsupial mole) protein is NADH-ubiquinone oxidoreductase chain 4L (MT-ND4L).